Here is a 162-residue protein sequence, read N- to C-terminus: ATP-dependent Clp protease adapter protein CLPS1, chloroplastic (162 aa).

A chloroplast-targeting transit peptide spans 1 to 58 (MAASCLRPAPTASAQMMTRSPVAGLPRPCSALQRSGCTLQGAFGTFAPQTTRTFVVTW).

This sequence belongs to the ClpS family.

The protein resides in the plastid. The protein localises to the chloroplast stroma. In terms of biological role, small adapter protein that modulate the activity of plastid Clp protease system (CLPC). Probably involved in substrate selection for plastid CLPC. The chain is ATP-dependent Clp protease adapter protein CLPS1, chloroplastic from Chlamydomonas reinhardtii (Chlamydomonas smithii).